Here is a 557-residue protein sequence, read N- to C-terminus: Dihydroxy-acid dehydratase (557 aa).

Residue aspartate 78 participates in Mg(2+) binding. Position 119 (cysteine 119) interacts with [2Fe-2S] cluster. Positions 120 and 121 each coordinate Mg(2+). The residue at position 121 (lysine 121) is an N6-carboxylysine. Cysteine 192 is a binding site for [2Fe-2S] cluster. Glutamate 442 lines the Mg(2+) pocket. The active-site Proton acceptor is the serine 468.

This sequence belongs to the IlvD/Edd family. In terms of assembly, homodimer. [2Fe-2S] cluster is required as a cofactor. Requires Mg(2+) as cofactor.

It catalyses the reaction (2R)-2,3-dihydroxy-3-methylbutanoate = 3-methyl-2-oxobutanoate + H2O. The catalysed reaction is (2R,3R)-2,3-dihydroxy-3-methylpentanoate = (S)-3-methyl-2-oxopentanoate + H2O. Its pathway is amino-acid biosynthesis; L-isoleucine biosynthesis; L-isoleucine from 2-oxobutanoate: step 3/4. It participates in amino-acid biosynthesis; L-valine biosynthesis; L-valine from pyruvate: step 3/4. In terms of biological role, functions in the biosynthesis of branched-chain amino acids. Catalyzes the dehydration of (2R,3R)-2,3-dihydroxy-3-methylpentanoate (2,3-dihydroxy-3-methylvalerate) into 2-oxo-3-methylpentanoate (2-oxo-3-methylvalerate) and of (2R)-2,3-dihydroxy-3-methylbutanoate (2,3-dihydroxyisovalerate) into 2-oxo-3-methylbutanoate (2-oxoisovalerate), the penultimate precursor to L-isoleucine and L-valine, respectively. The sequence is that of Dihydroxy-acid dehydratase from Bacillus cereus (strain Q1).